We begin with the raw amino-acid sequence, 329 residues long: Cytosolic arginine sensor for mTORC1 subunit 2 (329 aa).

ACT domains are found at residues 72 to 139 (ADAT…MHTL) and 262 to 322 (ELWK…NALQ).

The protein belongs to the GATS family. As to quaternary structure, may form homodimers and heterodimers.

Its subcellular location is the cytoplasm. The protein resides in the cytosol. In terms of biological role, functions as a negative regulator of the TORC1 signaling pathway. The polypeptide is Cytosolic arginine sensor for mTORC1 subunit 2 (Xenopus laevis (African clawed frog)).